A 478-amino-acid chain; its full sequence is Glutamate--tRNA ligase (478 aa).

The short motif at 15–25 is the 'HIGH' region element; sequence PSPTGFLHIGG. A 'KMSKS' region motif is present at residues 244–248; it reads KLSKR. Lysine 247 is a binding site for ATP.

The protein belongs to the class-I aminoacyl-tRNA synthetase family. Glutamate--tRNA ligase type 1 subfamily. Monomer.

The protein resides in the cytoplasm. It carries out the reaction tRNA(Glu) + L-glutamate + ATP = L-glutamyl-tRNA(Glu) + AMP + diphosphate. Its function is as follows. Catalyzes the attachment of glutamate to tRNA(Glu) in a two-step reaction: glutamate is first activated by ATP to form Glu-AMP and then transferred to the acceptor end of tRNA(Glu). This chain is Glutamate--tRNA ligase, found in Bradyrhizobium sp. (strain ORS 278).